The primary structure comprises 354 residues: UDP-N-acetylglucosamine--N-acetylmuramyl-(pentapeptide) pyrophosphoryl-undecaprenol N-acetylglucosamine transferase (354 aa).

UDP-N-acetyl-alpha-D-glucosamine contacts are provided by residues 13–15 (SGG), asparagine 125, serine 189, isoleucine 242, 261–266 (ALTVSE), and glutamine 286.

It belongs to the glycosyltransferase 28 family. MurG subfamily.

It localises to the cell inner membrane. The enzyme catalyses di-trans,octa-cis-undecaprenyl diphospho-N-acetyl-alpha-D-muramoyl-L-alanyl-D-glutamyl-meso-2,6-diaminopimeloyl-D-alanyl-D-alanine + UDP-N-acetyl-alpha-D-glucosamine = di-trans,octa-cis-undecaprenyl diphospho-[N-acetyl-alpha-D-glucosaminyl-(1-&gt;4)]-N-acetyl-alpha-D-muramoyl-L-alanyl-D-glutamyl-meso-2,6-diaminopimeloyl-D-alanyl-D-alanine + UDP + H(+). It functions in the pathway cell wall biogenesis; peptidoglycan biosynthesis. Its function is as follows. Cell wall formation. Catalyzes the transfer of a GlcNAc subunit on undecaprenyl-pyrophosphoryl-MurNAc-pentapeptide (lipid intermediate I) to form undecaprenyl-pyrophosphoryl-MurNAc-(pentapeptide)GlcNAc (lipid intermediate II). This Buchnera aphidicola subsp. Acyrthosiphon pisum (strain 5A) protein is UDP-N-acetylglucosamine--N-acetylmuramyl-(pentapeptide) pyrophosphoryl-undecaprenol N-acetylglucosamine transferase.